Here is a 275-residue protein sequence, read N- to C-terminus: MAALRRALIILAHSEKTSFNYAMKEAAVEALQRKGWEVAVSDLYAMKFDPIISRKDITGALKDPENFQYPAESALAYKESRLSPDIVTEQKKVEEADLLIFQFPLQWFGVPAILKGWFERVFTGGFAYTYAAMYDKGPFQNKKAVLSITTGGSESMYSLKGIHGDMNIILWPIQSGTLHFCGFQVLEPQLTYGIGHTPPDVRTEILAGWKKRLENIWDETPLYFAPSSLFDLNFQAGFLLKKEIEDEQKNNKYGLSVGHHLGKPIPTDNQIKARK.

FAD contacts are provided by residues H13, 19-20, and Q68; that span reads FN. S83 bears the Phosphoserine mark. 105 to 108 serves as a coordination point for FAD; sequence LQWF. Position 127–129 (127–129) interacts with substrate; the sequence is AYT. FAD-binding positions include 149–152, Y157, and R202; that span reads TTGG. The tract at residues 226–275 is important for apoenzyme conformational stability; it reads PSSLFDLNFQAGFLLKKEIEDEQKNNKYGLSVGHHLGKPIPTDNQIKARK. A Glycyl lysine isopeptide (Lys-Gly) (interchain with G-Cter in SUMO2) cross-link involves residue K252.

Belongs to the NAD(P)H dehydrogenase (quinone) family. In terms of assembly, homodimer. Interacts with PDLIM4 isoform 2; this interaction stabilizes PDLIM4 isoform 2 in response to oxidative stress and protects it from ubiquitin-independent degradation by the core 20S proteasome. Interacts with TP73 (via SAM domain); this interaction is NADH-dependent, stabilizes TP73 in response to oxidative stress and protects it from ubiquitin-independent degradation by the 20S proteasome. Interacts with TP53; this interaction is NADH-dependent, stabilizes TP53 in response to oxidative stress and protects it from ubiquitin-independent degradation by the 20S proteasome. The cofactor is FAD.

It is found in the cytoplasm. Its subcellular location is the cytosol. It catalyses the reaction a quinone + NADH + H(+) = a quinol + NAD(+). The catalysed reaction is a quinone + NADPH + H(+) = a quinol + NADP(+). The enzyme catalyses ubiquinone-10 + NADH + H(+) = ubiquinol-10 + NAD(+). It carries out the reaction menadione + NADH + H(+) = menadiol + NAD(+). Its function is as follows. Flavin-containing quinone reductase that catalyzes two-electron reduction of quinones to hydroquinones using either NADH or NADPH as electron donors. In a ping-pong kinetic mechanism, the electrons are sequentially transferred from NAD(P)H to flavin cofactor and then from reduced flavin to the quinone, bypassing the formation of semiquinone and reactive oxygen species. Regulates cellular redox state primarily through quinone detoxification. Reduces components of plasma membrane redox system such as coenzyme Q and vitamin quinones, producing antioxidant hydroquinone forms. In the process may function as superoxide scavenger to prevent hydroquinone oxidation and facilitate excretion. Alternatively, can activate quinones and their derivatives by generating redox reactive hydroquinones with DNA cross-linking antitumor potential. Acts as a gatekeeper of the core 20S proteasome known to degrade proteins with unstructured regions. Upon oxidative stress, interacts with tumor suppressors TP53 and TP73 in a NADH-dependent way and inhibits their ubiquitin-independent degradation by the 20S proteasome. In Cavia porcellus (Guinea pig), this protein is NAD(P)H dehydrogenase [quinone] 1 (NQO1).